Consider the following 185-residue polypeptide: Elongation factor P (185 aa).

Belongs to the elongation factor P family.

It localises to the cytoplasm. Its pathway is protein biosynthesis; polypeptide chain elongation. In terms of biological role, involved in peptide bond synthesis. Stimulates efficient translation and peptide-bond synthesis on native or reconstituted 70S ribosomes in vitro. Probably functions indirectly by altering the affinity of the ribosome for aminoacyl-tRNA, thus increasing their reactivity as acceptors for peptidyl transferase. In Nitratidesulfovibrio vulgaris (strain DP4) (Desulfovibrio vulgaris), this protein is Elongation factor P.